Consider the following 937-residue polypeptide: Protein translocase subunit SecA (937 aa).

ATP contacts are provided by residues Q87, 105–109 (GEGKT), and D494. The disordered stretch occupies residues 881–937 (RGLNYIGPDEGGRASVHSDAEEYGGGTPAAAGTRRERREAARAEGKGKRGPKSRRKH). Basic and acidic residues-rich tracts occupy residues 890–900 (EGGRASVHSDA) and 913–927 (TRRERREAARAEGKG). A compositionally biased stretch (basic residues) spans 928–937 (KRGPKSRRKH).

It belongs to the SecA family. In terms of assembly, monomer and homodimer. Part of the essential Sec protein translocation apparatus which comprises SecA, SecYEG and auxiliary proteins SecDF. Other proteins may also be involved.

It localises to the cell membrane. Its subcellular location is the cytoplasm. The catalysed reaction is ATP + H2O + cellular proteinSide 1 = ADP + phosphate + cellular proteinSide 2.. Part of the Sec protein translocase complex. Interacts with the SecYEG preprotein conducting channel. Has a central role in coupling the hydrolysis of ATP to the transfer of proteins into and across the cell membrane, serving as an ATP-driven molecular motor driving the stepwise translocation of polypeptide chains across the membrane. This Nocardia farcinica (strain IFM 10152) protein is Protein translocase subunit SecA.